A 98-amino-acid chain; its full sequence is HssA/B-like protein 39 (98 aa).

A disordered region spans residues Met1–Ile21.

It belongs to the hssA/B family.

The sequence is that of HssA/B-like protein 39 (hssl39) from Dictyostelium discoideum (Social amoeba).